The sequence spans 149 residues: Small ribosomal subunit protein uS11z (149 aa).

The tract at residues 130 to 149 is disordered; it reads VTPVPTDSTRRKGGRRGRRL. Positions 140–149 are enriched in basic residues; the sequence is RKGGRRGRRL.

Belongs to the universal ribosomal protein uS11 family.

The sequence is that of Small ribosomal subunit protein uS11z from Zea mays (Maize).